Here is a 154-residue protein sequence, read N- to C-terminus: UPF0225 protein YPDSF_0962 (154 aa).

It belongs to the UPF0225 family.

In Yersinia pestis (strain Pestoides F), this protein is UPF0225 protein YPDSF_0962.